A 350-amino-acid chain; its full sequence is Peroxidase 10 (350 aa).

An N-terminal signal peptide occupies residues 1–27; that stretch reads MDHKMSMYLFVSYLAIFTLFFKGFVSS. 4 disulfides stabilise this stretch: cysteine 57–cysteine 137, cysteine 90–cysteine 95, cysteine 143–cysteine 346, and cysteine 222–cysteine 256. Residue histidine 88 is the Proton acceptor of the active site. Ca(2+) contacts are provided by aspartate 89, valine 92, glycine 94, aspartate 96, and serine 98. Residue asparagine 102 is glycosylated (N-linked (GlcNAc...) asparagine). Proline 185 provides a ligand contact to substrate. N-linked (GlcNAc...) asparagine glycosylation occurs at asparagine 193. Histidine 215 is a binding site for heme b. Threonine 216 lines the Ca(2+) pocket. Ca(2+) is bound by residues aspartate 270, serine 273, and aspartate 278.

The protein belongs to the peroxidase family. Classical plant (class III) peroxidase subfamily. It depends on heme b as a cofactor. The cofactor is Ca(2+). As to expression, expressed in the whole plant, with the highest expression in roots.

It is found in the secreted. The enzyme catalyses 2 a phenolic donor + H2O2 = 2 a phenolic radical donor + 2 H2O. Its function is as follows. Removal of H(2)O(2), oxidation of toxic reductants, biosynthesis and degradation of lignin, suberization, auxin catabolism, response to environmental stresses such as wounding, pathogen attack and oxidative stress. These functions might be dependent on each isozyme/isoform in each plant tissue. The sequence is that of Peroxidase 10 (PER10) from Arabidopsis thaliana (Mouse-ear cress).